The following is a 95-amino-acid chain: Large ribosomal subunit protein eL42 (95 aa).

Zn(2+) contacts are provided by Cys-11, Cys-14, Cys-71, and Cys-74. Residues 11 to 74 form a C4-type zinc finger; sequence CPRCNTHTEH…QVLVITCTVC (64 aa).

It belongs to the eukaryotic ribosomal protein eL42 family. Part of the 50S ribosomal subunit. The cofactor is Zn(2+).

Binds to the 23S rRNA. In Aeropyrum pernix (strain ATCC 700893 / DSM 11879 / JCM 9820 / NBRC 100138 / K1), this protein is Large ribosomal subunit protein eL42.